A 95-amino-acid chain; its full sequence is Aspartyl/glutamyl-tRNA(Asn/Gln) amidotransferase subunit C (95 aa).

It belongs to the GatC family. In terms of assembly, heterotrimer of A, B and C subunits.

It catalyses the reaction L-glutamyl-tRNA(Gln) + L-glutamine + ATP + H2O = L-glutaminyl-tRNA(Gln) + L-glutamate + ADP + phosphate + H(+). The enzyme catalyses L-aspartyl-tRNA(Asn) + L-glutamine + ATP + H2O = L-asparaginyl-tRNA(Asn) + L-glutamate + ADP + phosphate + 2 H(+). Its function is as follows. Allows the formation of correctly charged Asn-tRNA(Asn) or Gln-tRNA(Gln) through the transamidation of misacylated Asp-tRNA(Asn) or Glu-tRNA(Gln) in organisms which lack either or both of asparaginyl-tRNA or glutaminyl-tRNA synthetases. The reaction takes place in the presence of glutamine and ATP through an activated phospho-Asp-tRNA(Asn) or phospho-Glu-tRNA(Gln). The chain is Aspartyl/glutamyl-tRNA(Asn/Gln) amidotransferase subunit C from Ruegeria pomeroyi (strain ATCC 700808 / DSM 15171 / DSS-3) (Silicibacter pomeroyi).